The sequence spans 169 residues: Peptide methionine sulfoxide reductase MsrA (169 aa).

C13 is a catalytic residue.

The protein belongs to the MsrA Met sulfoxide reductase family.

It catalyses the reaction L-methionyl-[protein] + [thioredoxin]-disulfide + H2O = L-methionyl-(S)-S-oxide-[protein] + [thioredoxin]-dithiol. The catalysed reaction is [thioredoxin]-disulfide + L-methionine + H2O = L-methionine (S)-S-oxide + [thioredoxin]-dithiol. In terms of biological role, has an important function as a repair enzyme for proteins that have been inactivated by oxidation. Catalyzes the reversible oxidation-reduction of methionine sulfoxide in proteins to methionine. This Mycolicibacterium gilvum (strain PYR-GCK) (Mycobacterium gilvum (strain PYR-GCK)) protein is Peptide methionine sulfoxide reductase MsrA.